A 229-amino-acid chain; its full sequence is MKLSFHGQSTIYFEGNGKKVIVDPFISGNDKCDLDEQTLDVDYIILTHGHADHFGDVVELANRNHATVIGSAELQGYLSTYHGVEDVHGMNIGGKAKFDFGSVKYVQAFHSSSFTHEDGIPVYLGMPMGLILEVEGKTIYHMGDTGLFSDMKLIAERHPVDVCFVPIGDNFTMGIDDASYAINEFVKPKISVPVHYNTFPLIEQDPQQFKDAVHEGEVQILEPGESVSF.

It belongs to the UPF0173 family.

This chain is UPF0173 metal-dependent hydrolase SH1218, found in Staphylococcus haemolyticus (strain JCSC1435).